A 146-amino-acid chain; its full sequence is Large ribosomal subunit protein uL15 (146 aa).

Residues 1–58 (MRLHELHPAPGSRPRATRVGRGIGSGLGKTSGRGHKGQKARSGGGVRRGFEGGQMPLT) form a disordered region. The segment covering 21-31 (RGIGSGLGKTS) has biased composition (gly residues).

It belongs to the universal ribosomal protein uL15 family. Part of the 50S ribosomal subunit.

Binds to the 23S rRNA. In Moorella thermoacetica (strain ATCC 39073 / JCM 9320), this protein is Large ribosomal subunit protein uL15.